The sequence spans 160 residues: Cyclic pyranopterin monophosphate synthase (160 aa).

Residues 75–77 and 116–117 contribute to the substrate site; these read MCH and ME. Aspartate 131 is a catalytic residue.

This sequence belongs to the MoaC family. In terms of assembly, homohexamer; trimer of dimers.

The catalysed reaction is (8S)-3',8-cyclo-7,8-dihydroguanosine 5'-triphosphate = cyclic pyranopterin phosphate + diphosphate. The protein operates within cofactor biosynthesis; molybdopterin biosynthesis. Its function is as follows. Catalyzes the conversion of (8S)-3',8-cyclo-7,8-dihydroguanosine 5'-triphosphate to cyclic pyranopterin monophosphate (cPMP). This Staphylococcus haemolyticus (strain JCSC1435) protein is Cyclic pyranopterin monophosphate synthase.